A 57-amino-acid polypeptide reads, in one-letter code: Large ribosomal subunit protein bL32 (57 aa).

This sequence belongs to the bacterial ribosomal protein bL32 family.

The protein is Large ribosomal subunit protein bL32 of Staphylococcus saprophyticus subsp. saprophyticus (strain ATCC 15305 / DSM 20229 / NCIMB 8711 / NCTC 7292 / S-41).